The following is a 424-amino-acid chain: MGCFGRTPKSNKRSDTKTTKNNDFTPKKLTVNANRDKLTQPSSDCLKVSICGDVSKEIVTKKDQLALDAKDTNVEDEVIVKKAQTFTFEELSVSTGNFKSDCFLGEGGFGKVYKGFIEKINQVVAIKQLDRNGAQGIREFVVEVLTLSLADHPNLVKLIGFCAEGVQRLLVYEYMPLGSLDNHLHDLPSGKNPLAWNTRMKIAAGAARGLEYLHDTMKPPVIYRDLKCSNILIDEGYHAKLSDFGLAKVGPRGSETHVSTRVMGTYGYCAPDYALTGQLTFKSDVYSFGVVLLELITGRKAYDNTRTRNHQSLVEWANPLFKDRKNFKKMVDPLLEGDYPVRGLYQALAIAAMCVQEQPSMRPVIADVVMALDHLASSKYDRSHRQKQDNVTETKVDEEKTLTTESNVCVEEKQEIKICSDQAT.

Residues 1–26 (MGCFGRTPKSNKRSDTKTTKNNDFTP) form a disordered region. A lipid anchor (N-myristoyl glycine) is attached at glycine 2. Cysteine 3 is lipidated: S-palmitoyl cysteine. Threonine 87 is subject to Phosphothreonine. Residues 98-377 (FKSDCFLGEG…VVMALDHLAS (280 aa)) enclose the Protein kinase domain. Residues 104-112 (LGEGGFGKV) and lysine 127 contribute to the ATP site. Tyrosine 172 is modified (phosphotyrosine). Catalysis depends on aspartate 225, which acts as the Proton acceptor. Residues serine 229 and serine 259 each carry the phosphoserine modification. A phosphothreonine mark is found at threonine 260 and threonine 265. At tyrosine 273 the chain carries Phosphotyrosine.

This sequence belongs to the protein kinase superfamily. Ser/Thr protein kinase family.

The protein resides in the cell membrane. The enzyme catalyses L-seryl-[protein] + ATP = O-phospho-L-seryl-[protein] + ADP + H(+). It carries out the reaction L-threonyl-[protein] + ATP = O-phospho-L-threonyl-[protein] + ADP + H(+). May be involved in plant defense signaling. The protein is Probable serine/threonine-protein kinase PBL6 of Arabidopsis thaliana (Mouse-ear cress).